The primary structure comprises 460 residues: Chromosomal replication initiator protein DnaA (460 aa).

Residues 1-91 form a domain I, interacts with DnaA modulators region; it reads MSLINPKVSA…LLWQNEDKSI (91 aa). The tract at residues 91–122 is domain II; sequence ICSIDIQVTEEKNSSSSIISKNKEESVNNLGS. Positions 123 to 342 are domain III, AAA+ region; it reads PLDPRFTFDN…GALNKVAHTS (220 aa). ATP contacts are provided by G169, G171, K172, and T173. Positions 343 to 460 are domain IV, binds dsDNA; the sequence is LIGRSMTVES…EINQLRKMFK (118 aa).

Belongs to the DnaA family. Oligomerizes as a right-handed, spiral filament on DNA at oriC.

The protein resides in the cytoplasm. Its function is as follows. Plays an essential role in the initiation and regulation of chromosomal replication. ATP-DnaA binds to the origin of replication (oriC) to initiate formation of the DNA replication initiation complex once per cell cycle. Binds the DnaA box (a 9 base pair repeat at the origin) and separates the double-stranded (ds)DNA. Forms a right-handed helical filament on oriC DNA; dsDNA binds to the exterior of the filament while single-stranded (ss)DNA is stabiized in the filament's interior. The ATP-DnaA-oriC complex binds and stabilizes one strand of the AT-rich DNA unwinding element (DUE), permitting loading of DNA polymerase. After initiation quickly degrades to an ADP-DnaA complex that is not apt for DNA replication. Binds acidic phospholipids. In Wolbachia sp. subsp. Brugia malayi (strain TRS), this protein is Chromosomal replication initiator protein DnaA.